The sequence spans 319 residues: MSKEMKGQYEPVAEIGVGAYGTVYKARDLQSGKFVALKNVRVQTNENGLPLSTVREVTLLKRLEHFDHPNIVKLMDVCASARTDRETKVTLVFEHVDQDLKTYLSKVPPPGLPLETIKDLMKQFLSGLEFLHLNCIVHRDLKPENILVTSGGQVKLADFGLARIYSCQMALTPVVVTLWYRAPEVLLQSTYATPVDVWSAGCIFAEMFKRKPLFCGNSEADQLCKIFDIIGLPSEEEWPVDVTLPRSAFSPRTQQPVDKFVPEIDAMGADLLLAMLTFSPQKRISASDALLHPFFADDPQACSKQEHFTHICTATDEVK.

In terms of domain architecture, Protein kinase spans 9–295 (YEPVAEIGVG…ASDALLHPFF (287 aa)). Residues 15 to 23 (IGVGAYGTV) and Lys38 contribute to the ATP site. Asp140 functions as the Proton acceptor in the catalytic mechanism. Thr172 bears the Phosphothreonine; by CAK mark.

Belongs to the protein kinase superfamily. CMGC Ser/Thr protein kinase family. CDC2/CDKX subfamily. Forms a stable complex with D-type G1 cyclins.

It is found in the cytoplasm. The catalysed reaction is L-seryl-[protein] + ATP = O-phospho-L-seryl-[protein] + ADP + H(+). It carries out the reaction L-threonyl-[protein] + ATP = O-phospho-L-threonyl-[protein] + ADP + H(+). Its activity is regulated as follows. Phosphorylation at Thr-172 is necessary for enzymatic activity. Probably involved in the control of the cell cycle. The chain is Cyclin-dependent kinase 4 (cdk4) from Xenopus laevis (African clawed frog).